We begin with the raw amino-acid sequence, 465 residues long: Triplex capsid protein 1 (465 aa).

The tract at residues 1–29 (MKTNPLPATPSVWGGSTVELPPTTRDTAG) is disordered.

This sequence belongs to the herpesviridae TRX1 protein family. Interacts with TRX2, MCP and capsid vertex component 2/CVC2.

The protein localises to the virion. It localises to the host nucleus. Structural component of the T=16 icosahedral capsid. The capsid is composed of pentamers and hexamers of major capsid protein/MCP, which are linked together by heterotrimers called triplexes. These triplexes are formed by a single molecule of triplex protein 1/TRX1 and two copies of triplex protein 2/TRX2. Additionally, TRX1 is required for efficient transport of TRX2 to the nucleus, which is the site of capsid assembly. This Homo sapiens (Human) protein is Triplex capsid protein 1.